We begin with the raw amino-acid sequence, 579 residues long: Folliculin (579 aa).

The interval 30–81 is disordered; that stretch reads PQGDGNEDSPGQGEQAEEEEGGIQMNSRMRAHSPAEGASVESSSPGPKKSDM. Residues S62 and S73 each carry the phosphoserine modification. A uDENN FLCN/SMCR8-type domain is found at 86 to 242; that stretch reads RSLAAGHPGY…RNGNAARSLT (157 aa). The essential for interaction with LDHA stretch occupies residues 210–220; the sequence is AEQFGCPQRAQ. Positions 287–310 form a coiled coil; sequence EKLADLEEESESWDNSEAEEEEKA. Positions 294–308 are enriched in acidic residues; sequence EESESWDNSEAEEEE. Residues 294-337 form a disordered region; sequence EESESWDNSEAEEEEKAPVLPESTEGRELTQGPAESSSLSGCGS. S302 carries the phosphoserine modification. Positions 326-336 are enriched in polar residues; it reads PAESSSLSGCG. One can recognise a cDENN FLCN/SMCR8-type domain in the interval 339 to 491; it reads QPRKLPVFKS…ILNKIEAALT (153 aa). Phosphoserine; by ULK1 is present on residues S406, S537, and S542. In terms of domain architecture, dDENN FLCN/SMCR8-type spans 493–558; the sequence is QNLSVDVVDQ…LLKFWMTGLS (66 aa). Position 571 is a phosphoserine (S571).

Belongs to the folliculin family. In terms of assembly, interacts (via C-terminus) with FNIP1 or FNIP2 (via C-terminus). Component of the lysosomal folliculin complex (LFC), composed of FLCN, FNIP1 (or FNIP2), RagA/RRAGA or RagB/RRAGB GDP-bound, RagC/RRAGC or RagD/RRAGD GTP-bound, and Ragulator. Interaction with FNIP1 or FNIP2 mediates indirect interaction with the PRKAA1, PRKAB1 and PRKAG1 subunits of 5'-AMP-activated protein kinase (AMPK). Interacts with HSP90AA1 in the presence of FNIP1. Interacts with HSP70, STUB1, CDC37, AHSA1, CCT2, STIP1, PTGES3 and PPP5C. Interacts with GABARAP; interaction takes place in the presence of FNIP1 and/or FNIP2. Interacts with RILP; the interaction is direct and promotes association between RILP and RAB34. Interacts with KIF3A and KIF3B. Interacts with lactate dehydrogenase LDHA, but not LDHB; the interaction is direct, may preferentially bind LDHA dimers rather than tetramers, and regulates LDHA activity, acting as an uncompetitive inhibitor. In terms of processing, phosphorylation by ULK1 modulates the interaction with GABARAP and is required to regulate autophagy. As to expression, expressed in most tissues tested, including skin, lung, kidney, heart, testis and stomach.

Its subcellular location is the lysosome membrane. The protein resides in the cytoplasm. The protein localises to the cytosol. It is found in the cell projection. It localises to the cilium. Its subcellular location is the cytoskeleton. The protein resides in the microtubule organizing center. The protein localises to the centrosome. It is found in the spindle. It localises to the nucleus. GTPase-activating activity is inhibited in the folliculin complex (LFC), which stabilizes the GDP-bound state of RagA/RRAGA (or RagB/RRAGB), because Arg-164 is located far from the RagC/RRAGC or RagD/RRAGD nucleotide pocket. Disassembly of the LFC complex upon amino acid restimulation liberates the GTPase-activating activity. Its function is as follows. Multi-functional protein, involved in both the cellular response to amino acid availability and in the regulation of glycolysis. GTPase-activating protein that plays a key role in the cellular response to amino acid availability through regulation of the non-canonical mTORC1 signaling cascade controlling the MiT/TFE factors TFEB and TFE3. Activates mTORC1 by acting as a GTPase-activating protein: specifically stimulates GTP hydrolysis by RagC/RRAGC or RagD/RRAGD, promoting the conversion to the GDP-bound state of RagC/RRAGC or RagD/RRAGD, and thereby activating the kinase activity of mTORC1. The GTPase-activating activity is inhibited during starvation and activated in presence of nutrients. Acts as a key component for non-canonical mTORC1-dependent control of the MiT/TFE factors TFEB and TFE3, while it is not involved in mTORC1-dependent phosphorylation of canonical RPS6KB1/S6K1 and EIF4EBP1/4E-BP1. In low-amino acid conditions, the lysosomal folliculin complex (LFC) is formed on the membrane of lysosomes, which inhibits the GTPase-activating activity of FLCN, inactivates mTORC1 and maximizes nuclear translocation of TFEB and TFE3. Upon amino acid restimulation, RagA/RRAGA (or RagB/RRAGB) nucleotide exchange promotes disassembly of the LFC complex and liberates the GTPase-activating activity of FLCN, leading to activation of mTORC1 and subsequent cytoplasmic retention of TFEB and TFE3. Indirectly acts as a positive regulator of Wnt signaling by promoting mTOR-dependent cytoplasmic retention of MiT/TFE factor TFE3. Required for the exit of hematopoietic stem cell from pluripotency by promoting mTOR-dependent cytoplasmic retention of TFE3, thereby increasing Wnt signaling. Acts as an inhibitor of browning of adipose tissue by regulating mTOR-dependent cytoplasmic retention of TFE3. Involved in the control of embryonic stem cells differentiation; together with LAMTOR1 it is necessary to recruit and activate RagC/RRAGC and RagD/RRAGD at the lysosomes, and to induce exit of embryonic stem cells from pluripotency via non-canonical, mTOR-independent TFE3 inactivation. In response to flow stress, regulates STK11/LKB1 accumulation and mTORC1 activation through primary cilia: may act by recruiting STK11/LKB1 to primary cilia for activation of AMPK resided at basal bodies, causing mTORC1 down-regulation. Together with FNIP1 and/or FNIP2, regulates autophagy: following phosphorylation by ULK1, interacts with GABARAP and promotes autophagy. Required for starvation-induced perinuclear clustering of lysosomes by promoting association of RILP with its effector RAB34. Regulates glycolysis by binding to lactate dehydrogenase LDHA, acting as an uncompetitive inhibitor. The protein is Folliculin of Homo sapiens (Human).